The primary structure comprises 552 residues: Cytochrome c oxidase subunit 1 (552 aa).

The chain crosses the membrane as a helical span at residues 35-55; the sequence is VIGIQYLVTAFIFYLIGGLMA. Residue histidine 82 coordinates Fe(II)-heme a. The next 6 helical transmembrane spans lie at 85-105, 120-140, 164-184, 211-231, 252-272, and 284-304; these read IMIF…YLVP, ALAF…FLFG, WILA…NFIV, LLAL…LFDI, LFWF…FGIM, and IFGY…GLFV. Histidine 258 and tyrosine 262 together coordinate Cu cation. Residues 258–262 constitute a cross-link (1'-histidyl-3'-tyrosine (His-Tyr)); it reads HPAVY. Cu cation-binding residues include histidine 307 and histidine 308. The next 5 membrane-spanning stretches (helical) occupy residues 321–341, 355–375, 390–410, 426–446, and 470–490; these read FFTI…FSWV, MLFA…GVTL, VVAH…YAGI, LGIL…LPMH, and ICTI…INII. Heme a3 is bound at residue histidine 393. Histidine 395 contacts Fe(II)-heme a.

It belongs to the heme-copper respiratory oxidase family. Cu(2+) is required as a cofactor. Requires heme as cofactor.

Its subcellular location is the cell membrane. The enzyme catalyses 4 Fe(II)-[cytochrome c] + O2 + 8 H(+)(in) = 4 Fe(III)-[cytochrome c] + 2 H2O + 4 H(+)(out). It participates in energy metabolism; oxidative phosphorylation. Its function is as follows. Cytochrome c oxidase is the component of the respiratory chain that catalyzes the reduction of oxygen to water. Subunits 1-3 form the functional core of the enzyme complex. CO I is the catalytic subunit of the enzyme. Electrons originating in cytochrome c are transferred via the copper A center of subunit 2 and heme A of subunit 1 to the bimetallic center formed by heme A3 and copper B. This is Cytochrome c oxidase subunit 1 (ctaD) from Thermostichus vulcanus (Synechococcus vulcanus).